A 132-amino-acid chain; its full sequence is Small ribosomal subunit protein uS8 (132 aa).

Belongs to the universal ribosomal protein uS8 family. Part of the 30S ribosomal subunit. Contacts proteins S5 and S12.

In terms of biological role, one of the primary rRNA binding proteins, it binds directly to 16S rRNA central domain where it helps coordinate assembly of the platform of the 30S subunit. This is Small ribosomal subunit protein uS8 from Geobacter metallireducens (strain ATCC 53774 / DSM 7210 / GS-15).